We begin with the raw amino-acid sequence, 331 residues long: Cytosolic 5'-nucleotidase 3A (331 aa).

Residue Asp-83 is the Nucleophile of the active site. 2 residues coordinate Mg(2+): Asp-83 and Asp-85. Asp-85 serves as the catalytic Proton donor. Position 130 (Glu-130) interacts with CMP. 2 residues coordinate N(7)-methyl-GMP: Glu-130 and Ser-151. Substrate-binding positions include 198 to 199 (SA) and Lys-247. A Mg(2+)-binding site is contributed by Asp-272.

This sequence belongs to the pyrimidine 5'-nucleotidase family.

Its subcellular location is the cytoplasm. The enzyme catalyses N(7)-methyl-GMP + H2O = N(7)-methylguanosine + phosphate. It catalyses the reaction a ribonucleoside 5'-phosphate + H2O = a ribonucleoside + phosphate. Nucleotidase which shows specific activity towards cytidine monophosphate (CMP) and 7-methylguanosine monophosphate (m(7)GMP). CMP seems to be the preferred substrate. This Gallus gallus (Chicken) protein is Cytosolic 5'-nucleotidase 3A (NT5C3A).